The sequence spans 275 residues: 5'-nucleotidase SurE (275 aa).

A divalent metal cation is bound by residues Asp12, Asp13, Ser44, and Asn102.

The protein belongs to the SurE nucleotidase family. It depends on a divalent metal cation as a cofactor.

It localises to the cytoplasm. It catalyses the reaction a ribonucleoside 5'-phosphate + H2O = a ribonucleoside + phosphate. Its function is as follows. Nucleotidase that shows phosphatase activity on nucleoside 5'-monophosphates. The protein is 5'-nucleotidase SurE of Synechococcus sp. (strain RCC307).